Reading from the N-terminus, the 876-residue chain is Alanine--tRNA ligase (876 aa).

Residues H564, H568, C666, and H670 each coordinate Zn(2+).

It belongs to the class-II aminoacyl-tRNA synthetase family. Homotetramer. It depends on Zn(2+) as a cofactor.

It is found in the cytoplasm. It carries out the reaction tRNA(Ala) + L-alanine + ATP = L-alanyl-tRNA(Ala) + AMP + diphosphate. Catalyzes the attachment of alanine to tRNA(Ala) in a two-step reaction: alanine is first activated by ATP to form Ala-AMP and then transferred to the acceptor end of tRNA(Ala). Also edits incorrectly charged Ser-tRNA(Ala) and Gly-tRNA(Ala) via its editing domain. This chain is Alanine--tRNA ligase, found in Salmonella typhimurium (strain LT2 / SGSC1412 / ATCC 700720).